Reading from the N-terminus, the 95-residue chain is Large ribosomal subunit protein bL25 (95 aa).

It belongs to the bacterial ribosomal protein bL25 family. As to quaternary structure, part of the 50S ribosomal subunit; part of the 5S rRNA/L5/L18/L25 subcomplex. Contacts the 5S rRNA. Binds to the 5S rRNA independently of L5 and L18.

Its function is as follows. This is one of the proteins that binds to the 5S RNA in the ribosome where it forms part of the central protuberance. The sequence is that of Large ribosomal subunit protein bL25 from Shewanella amazonensis (strain ATCC BAA-1098 / SB2B).